The primary structure comprises 321 residues: MSINKTLKIATRQSPLALWQANYVKNRLQQRYSHLSVELVPIITKGDVILDTPLAKIGGKGLFVKELENALLNGEADIAVHSMKDVPMQFPKGLELSVICPREDPRDAFVSNKYRTLDELPQGAIVGTSSLRRQCQLKNWRADLDIRSLRGNVGTRLNKLDQGDYDAIILASAGLIRLGLTERIRSFIEIDTILPACGQGAVGIECRVDDRDVQSLLMPLADQTTTYCVLAERAMNFHLQGGCQVPIGAYAILENNQLYLRGLVGDVHGSQILSAEGQFELSLDFESSQSAVQKAEELGVSIAEQLLQQGADKILQAVYQS.

Cys-243 is subject to S-(dipyrrolylmethanemethyl)cysteine.

Belongs to the HMBS family. As to quaternary structure, monomer. The cofactor is dipyrromethane.

The enzyme catalyses 4 porphobilinogen + H2O = hydroxymethylbilane + 4 NH4(+). It functions in the pathway porphyrin-containing compound metabolism; protoporphyrin-IX biosynthesis; coproporphyrinogen-III from 5-aminolevulinate: step 2/4. Tetrapolymerization of the monopyrrole PBG into the hydroxymethylbilane pre-uroporphyrinogen in several discrete steps. The chain is Porphobilinogen deaminase from Histophilus somni (strain 129Pt) (Haemophilus somnus).